Reading from the N-terminus, the 465-residue chain is Hexokinase-4 (465 aa).

Positions 10–454 constitute a Hexokinase domain; that stretch reads ATKKEKVEQI…SGRGAALVSA (445 aa). The segment at 67 to 203 is hexokinase small subdomain; the sequence is EGSEVGDFLS…DFEMDVVAMV (137 aa). 78–83 provides a ligand contact to ATP; the sequence is DLGGTN. Substrate contacts are provided by residues 151-152, 168-169, and 204-205; these read SF, TK, and ND. The tract at residues 204 to 443 is hexokinase large subdomain; sequence NDTVATMISC…CEITFIESEE (240 aa). T228 is an ATP binding site. Substrate-binding residues include N231, E256, and E290. ATP contacts are provided by residues 295–296, 332–336, and 411–415; these read GK, TRFVS, and SVYKL.

Belongs to the hexokinase family. As to quaternary structure, monomer. Interacts with MIDN; the interaction occurs preferentially at low glucose levels and results in inhibition of hexokinase activity. Interacts with GCKR; leading to sequestration in the nucleus. As to expression, expression is restricted to the liver and pancreatic islets (at protein level).

It is found in the cytoplasm. The protein resides in the nucleus. Its subcellular location is the mitochondrion. The catalysed reaction is a D-hexose + ATP = a D-hexose 6-phosphate + ADP + H(+). It carries out the reaction D-fructose + ATP = D-fructose 6-phosphate + ADP + H(+). It catalyses the reaction D-glucose + ATP = D-glucose 6-phosphate + ADP + H(+). The enzyme catalyses D-mannose + ATP = D-mannose 6-phosphate + ADP + H(+). It participates in carbohydrate metabolism; hexose metabolism. It functions in the pathway carbohydrate degradation; glycolysis; D-glyceraldehyde 3-phosphate and glycerone phosphate from D-glucose: step 1/4. With respect to regulation, subject to allosteric regulation. Low glucose and high fructose-6-phosphate triggers association with the inhibitor GCKR followed by sequestration in the nucleus. Functionally, catalyzes the phosphorylation of hexose, such as D-glucose, D-fructose and D-mannose, to hexose 6-phosphate (D-glucose 6-phosphate, D-fructose 6-phosphate and D-mannose 6-phosphate, respectively). Compared to other hexokinases, has a weak affinity for D-glucose, and is effective only when glucose is abundant. Mainly expressed in pancreatic beta cells and the liver and constitutes a rate-limiting step in glucose metabolism in these tissues. Since insulin secretion parallels glucose metabolism and the low glucose affinity of GCK ensures that it can change its enzymatic activity within the physiological range of glucose concentrations, GCK acts as a glucose sensor in the pancreatic beta cell. In pancreas, plays an important role in modulating insulin secretion. In liver, helps to facilitate the uptake and conversion of glucose by acting as an insulin-sensitive determinant of hepatic glucose usage. Required to provide D-glucose 6-phosphate for the synthesis of glycogen. Mediates the initial step of glycolysis by catalyzing phosphorylation of D-glucose to D-glucose 6-phosphate. The sequence is that of Hexokinase-4 from Rattus norvegicus (Rat).